Here is a 632-residue protein sequence, read N- to C-terminus: Extracellular metalloproteinase 2 (632 aa).

The signal sequence occupies residues 1–19 (MHGLLLAGLAAALPLGVAG). A propeptide spanning residues 20–244 (LPARQQSGLS…VHNVVDYVAS (225 aa)) is cleaved from the precursor. Asparagine 270 carries N-linked (GlcNAc...) asparagine glycosylation. Histidine 429 serves as a coordination point for Zn(2+). Residue glutamate 430 is part of the active site. Histidine 433 contacts Zn(2+).

This sequence belongs to the peptidase M36 family. Zn(2+) is required as a cofactor.

The protein localises to the secreted. In terms of biological role, secreted metalloproteinase probably acting as a virulence factor. This chain is Extracellular metalloproteinase 2 (MEP2), found in Trichophyton tonsurans (Scalp ringworm fungus).